The primary structure comprises 241 residues: Corrinoid adenosyltransferase MMAB (241 aa).

The transit peptide at 1-26 (MAVWGPGGRLGLRGCLGARKLLCPRF) directs the protein to the mitochondrion. The interval 27-69 (QSRGPQGVEDGDRPQPSSKTPKVPKIYTKTGDKGFSSTFTGER) is disordered. ATP-binding positions include 54–63 (TKTGDKGFSS) and lysine 72. Position 128 is a phosphoserine (serine 128). 184–188 (RRAER) is an ATP binding site. Lysine 205 carries the N6-succinyllysine modification. Asparagine 208 is an ATP binding site. Position 224 is an N6-acetyllysine; alternate (lysine 224). Lysine 224 is subject to N6-succinyllysine; alternate.

This sequence belongs to the Cob(I)alamin adenosyltransferase family. Homotrimer.

The protein localises to the mitochondrion. The enzyme catalyses cob(I)alamin-[corrinoid adenosyltransferase] + ATP = apo-[corrinoid adenosyltransferase] + adenosylcob(III)alamin + triphosphate. Converts cob(I)alamin to adenosylcobalamin (adenosylcob(III)alamin), a coenzyme for methylmalonyl-CoA mutase, therefore participates in the final step of the vitamin B12 conversion. Generates adenosylcobalamin (AdoCbl) and directly delivers the cofactor to MUT in a transfer that is stimulated by ATP-binding to MMAB and gated by MMAA. The sequence is that of Corrinoid adenosyltransferase MMAB from Bos taurus (Bovine).